Reading from the N-terminus, the 509-residue chain is Lysine--tRNA ligase (509 aa).

Over residues 1–18 (MSEQNPTQAAKQAPQQEL) the composition is skewed to polar residues. Residues 1-20 (MSEQNPTQAAKQAPQQELND) are disordered. Mg(2+) is bound by residues glutamate 418 and glutamate 425.

This sequence belongs to the class-II aminoacyl-tRNA synthetase family. As to quaternary structure, homodimer. Mg(2+) is required as a cofactor.

The protein localises to the cytoplasm. It carries out the reaction tRNA(Lys) + L-lysine + ATP = L-lysyl-tRNA(Lys) + AMP + diphosphate. In Psychromonas ingrahamii (strain DSM 17664 / CCUG 51855 / 37), this protein is Lysine--tRNA ligase.